A 324-amino-acid chain; its full sequence is Probable uridine nucleosidase 1 (324 aa).

His-248 is an active-site residue.

Belongs to the IUNH family.

The protein resides in the cytoplasm. The catalysed reaction is uridine + H2O = D-ribose + uracil. Functionally, involved in pyrimidine breakdown. In Oryza sativa subsp. japonica (Rice), this protein is Probable uridine nucleosidase 1 (URH1).